Here is an 879-residue protein sequence, read N- to C-terminus: Alanine--tRNA ligase (879 aa).

Positions 566, 570, 668, and 672 each coordinate Zn(2+).

This sequence belongs to the class-II aminoacyl-tRNA synthetase family. Zn(2+) is required as a cofactor.

The protein resides in the cytoplasm. The catalysed reaction is tRNA(Ala) + L-alanine + ATP = L-alanyl-tRNA(Ala) + AMP + diphosphate. Its function is as follows. Catalyzes the attachment of alanine to tRNA(Ala) in a two-step reaction: alanine is first activated by ATP to form Ala-AMP and then transferred to the acceptor end of tRNA(Ala). Also edits incorrectly charged Ser-tRNA(Ala) and Gly-tRNA(Ala) via its editing domain. The sequence is that of Alanine--tRNA ligase from Halalkalibacterium halodurans (strain ATCC BAA-125 / DSM 18197 / FERM 7344 / JCM 9153 / C-125) (Bacillus halodurans).